Consider the following 354-residue polypeptide: MSKVKSITRESWILSTFPEWGSWLNEEIEQEQVAPGTFAMWWLGCTGIWLKSEGGTNVCVDFWCGTGKQSHGNPLMKAGHQMQRMAGVKKLQPNLRTTPFVLDPFAIRQIDAVLATHDHNDHIDVNVAAAVMQNCADDVPFIGPKTCVDLWIGWGVPKERCIVVKPGDVVKVKDIEIHALDAFDRTALITLPAEQKAAGVLPDGMDERAVNYLFKTPGGTLYHSGDSHYSNYYAKHGNEHQIDVALGSYGENPRGITDKMTSADILRMAEALNTKVVIPFHHDIWSNFQADPQEIRVLWEMKKDRLKYGFKPFIWQVGGKFTWPLDKDNFEYHYPRGFDDCFTIEPDLPFKSFL.

The protein belongs to the UlaG family. A divalent metal cation serves as cofactor.

The protein localises to the cytoplasm. The enzyme catalyses L-ascorbate 6-phosphate + H2O = 3-dehydro-L-gulonate 6-phosphate. The protein operates within cofactor degradation; L-ascorbate degradation; D-xylulose 5-phosphate from L-ascorbate: step 1/4. Its function is as follows. Probably catalyzes the hydrolysis of L-ascorbate-6-P into 3-keto-L-gulonate-6-P. Is essential for L-ascorbate utilization under anaerobic conditions. This chain is Probable L-ascorbate-6-phosphate lactonase UlaG, found in Escherichia fergusonii (strain ATCC 35469 / DSM 13698 / CCUG 18766 / IAM 14443 / JCM 21226 / LMG 7866 / NBRC 102419 / NCTC 12128 / CDC 0568-73).